We begin with the raw amino-acid sequence, 507 residues long: Ribonuclease Y (507 aa).

The helical transmembrane segment at 1–21 (MLWYIVAGAGGLLIGYLIANY) threads the bilayer. Positions 197 to 282 (TVSTVSLPSD…EMYEKAKQEV (86 aa)) constitute a KH domain. Residues 323 to 416 (VLNHSIEVAL…VAAADALSAA (94 aa)) enclose the HD domain.

Belongs to the RNase Y family.

The protein localises to the cell membrane. Its function is as follows. Endoribonuclease that initiates mRNA decay. In Thermotoga sp. (strain RQ2), this protein is Ribonuclease Y.